The primary structure comprises 461 residues: Argininosuccinate lyase (461 aa).

The protein belongs to the lyase 1 family. Argininosuccinate lyase subfamily.

Its subcellular location is the cytoplasm. It catalyses the reaction 2-(N(omega)-L-arginino)succinate = fumarate + L-arginine. The protein operates within amino-acid biosynthesis; L-arginine biosynthesis; L-arginine from L-ornithine and carbamoyl phosphate: step 3/3. This chain is Argininosuccinate lyase, found in Streptococcus gordonii (strain Challis / ATCC 35105 / BCRC 15272 / CH1 / DL1 / V288).